A 129-amino-acid polypeptide reads, in one-letter code: 3-aminoacrylate deaminase RutC (129 aa).

Belongs to the RutC family.

It carries out the reaction (Z)-3-aminoacrylate + H2O + H(+) = 3-oxopropanoate + NH4(+). Its function is as follows. Involved in pyrimidine catabolism. Catalyzes the deamination of 3-aminoacrylate to malonic semialdehyde, a reaction that can also occur spontaneously. RutC may facilitate the reaction and modulate the metabolic fitness, rather than catalyzing essential functions. The chain is 3-aminoacrylate deaminase RutC from Caulobacter segnis (strain ATCC 21756 / DSM 7131 / JCM 7823 / NBRC 15250 / LMG 17158 / TK0059) (Mycoplana segnis).